We begin with the raw amino-acid sequence, 129 residues long: Fluoride-specific ion channel FluC (129 aa).

Transmembrane regions (helical) follow at residues 4–24 (LFVA…SGLI), 32–52 (FPWG…AFAT), 69–89 (FFMV…LQTL), and 105–125 (VLSV…AVLI). Na(+) is bound by residues G76 and T79.

This sequence belongs to the fluoride channel Fluc/FEX (TC 1.A.43) family.

The protein localises to the cell inner membrane. It catalyses the reaction fluoride(in) = fluoride(out). Na(+) is not transported, but it plays an essential structural role and its presence is essential for fluoride channel function. Functionally, fluoride-specific ion channel. Important for reducing fluoride concentration in the cell, thus reducing its toxicity. The chain is Fluoride-specific ion channel FluC from Rhodospirillum rubrum (strain ATCC 11170 / ATH 1.1.1 / DSM 467 / LMG 4362 / NCIMB 8255 / S1).